The primary structure comprises 452 residues: Pup--protein ligase (452 aa).

Position 9 (Glu-9) interacts with Mg(2+). Arg-53 is an ATP binding site. Tyr-55 contacts Mg(2+). The Proton acceptor role is filled by Asp-57. A Mg(2+)-binding site is contributed by Glu-63. Positions 66 and 419 each coordinate ATP.

The protein belongs to the Pup ligase/Pup deamidase family. Pup-conjugating enzyme subfamily.

The enzyme catalyses ATP + [prokaryotic ubiquitin-like protein]-L-glutamate + [protein]-L-lysine = ADP + phosphate + N(6)-([prokaryotic ubiquitin-like protein]-gamma-L-glutamyl)-[protein]-L-lysine.. It participates in protein degradation; proteasomal Pup-dependent pathway. It functions in the pathway protein modification; protein pupylation. Its function is as follows. Catalyzes the covalent attachment of the prokaryotic ubiquitin-like protein modifier Pup to the proteasomal substrate proteins, thereby targeting them for proteasomal degradation. This tagging system is termed pupylation. The ligation reaction involves the side-chain carboxylate of the C-terminal glutamate of Pup and the side-chain amino group of a substrate lysine. This Gordonia bronchialis (strain ATCC 25592 / DSM 43247 / BCRC 13721 / JCM 3198 / KCTC 3076 / NBRC 16047 / NCTC 10667) (Rhodococcus bronchialis) protein is Pup--protein ligase.